The sequence spans 299 residues: Zinc finger protein-like 1 homolog (299 aa).

The B box-type; degenerate zinc-finger motif lies at 1–43 (MGLCKCPKRLVTNQFCFEHRVNVCEHCMVQSHPKCIVQSYLQW). The segment at 53-101 (CTLCGTTLEQGDCVRLVCYHVFHWDCLNARQAALPANTAPRGHQCPACS) adopts an RING-type; atypical zinc-finger fold. The interval 200–231 (AGDYASSRRPLLPRQSPIGGTDRDDNKYQRRT) is disordered. At Ser-215 the chain carries Phosphoserine. A helical transmembrane segment spans residues 256-276 (WFLVTAGILAFVLFVYLMAWL).

It belongs to the ZFPL1 family.

It is found in the membrane. In Drosophila melanogaster (Fruit fly), this protein is Zinc finger protein-like 1 homolog.